A 164-amino-acid chain; its full sequence is Polygalacturonase (164 aa).

This sequence belongs to the glycosyl hydrolase 28 family.

It is found in the secreted. The protein localises to the cell wall. The enzyme catalyses (1,4-alpha-D-galacturonosyl)n+m + H2O = (1,4-alpha-D-galacturonosyl)n + (1,4-alpha-D-galacturonosyl)m.. The polypeptide is Polygalacturonase (Cupressus sempervirens (Italian cypress)).